The primary structure comprises 370 residues: 3-hydroxy-3-methylglutaryl-CoA lyase, cytoplasmic (370 aa).

The N-myristoyl glycine moiety is linked to residue Gly2. In terms of domain architecture, Pyruvate carboxyltransferase spans 78 to 345 (VKIVEVGPRD…NTGVNLYKVM (268 aa)). Substrate is bound at residue Arg86. Positions 87, 278, and 280 each coordinate a divalent metal cation. The active site involves Cys311. Asn320 contributes to the a divalent metal cation binding site.

It belongs to the HMG-CoA lyase family. Requires a divalent metal cation as cofactor.

Its subcellular location is the cytoplasm. It is found in the cytosol. The protein localises to the endoplasmic reticulum membrane. The catalysed reaction is (3S)-3-hydroxy-3-methylglutaryl-CoA = acetoacetate + acetyl-CoA. It participates in metabolic intermediate metabolism; (S)-3-hydroxy-3-methylglutaryl-CoA degradation; acetoacetate from (S)-3-hydroxy-3-methylglutaryl-CoA: step 1/1. Functionally, non-mitochondrial 3-hydroxy-3-methylglutaryl-CoA lyase that catalyzes a cation-dependent cleavage of (S)-3-hydroxy-3-methylglutaryl-CoA into acetyl-CoA and acetoacetate, a key step in ketogenesis, the products of which support energy production in nonhepatic animal tissues. In Homo sapiens (Human), this protein is 3-hydroxy-3-methylglutaryl-CoA lyase, cytoplasmic (HMGCLL1).